Here is a 478-residue protein sequence, read N- to C-terminus: UDP-N-acetylmuramate--L-alanine ligase (478 aa).

Gly130 to Thr136 contributes to the ATP binding site.

This sequence belongs to the MurCDEF family.

It is found in the cytoplasm. It catalyses the reaction UDP-N-acetyl-alpha-D-muramate + L-alanine + ATP = UDP-N-acetyl-alpha-D-muramoyl-L-alanine + ADP + phosphate + H(+). It participates in cell wall biogenesis; peptidoglycan biosynthesis. Cell wall formation. The polypeptide is UDP-N-acetylmuramate--L-alanine ligase (Microcystis aeruginosa (strain NIES-843 / IAM M-2473)).